The chain runs to 561 residues: Carboxylesterase 1E (561 aa).

The signal sequence occupies residues 1–18 (MCLYALILVFLAAFTAGG). 2 N-linked (GlcNAc...) asparagine glycosylation sites follow: N79 and N107. C87 and C116 are joined by a disulfide. S221 acts as the Acyl-ester intermediate in catalysis. Residues C273 and C284 are joined by a disulfide bond. Catalysis depends on charge relay system residues E353 and H466. The N-linked (GlcNAc...) asparagine glycan is linked to N489. A Prevents secretion from ER motif is present at residues 558–561 (HTEL).

It belongs to the type-B carboxylesterase/lipase family. As to expression, expressed in liver.

The protein localises to the endoplasmic reticulum lumen. Its subcellular location is the microsome membrane. The catalysed reaction is a carboxylic ester + H2O = an alcohol + a carboxylate + H(+). The enzyme catalyses all-trans-retinyl hexadecanoate + H2O = all-trans-retinol + hexadecanoate + H(+). Involved in the detoxification of xenobiotics and in the activation of ester and amide prodrugs. Hydrolyzes retinyl esters. The sequence is that of Carboxylesterase 1E (Ces1e) from Rattus norvegicus (Rat).